The chain runs to 237 residues: MANSKFGYVRQFETHDVILPQCYIVVRIDGKKFHEFSKFYEFAKPNDENALKLMNACAKNLVLKYKNDIILAFGESDEYSFILKSSTTLFNRRKDKLATLFGSFFTSNYVALWAKFFPEKPLNIKHLPYFDSRCVAYPNLQTIKDYLSWRYVDTHINNLYNTTFWQLIIKCGLTPQESEKKLCGTFSNEKQEILFSECGINYNNEPEMFKKGSLVTRKGEILHINVIAQIDELFEGY.

N-acetylalanine is present on A2. Mg(2+) contacts are provided by D29 and G30. The GTP site is built by K32, F33, H34, K44, and D47. D77 is a binding site for Mg(2+).

It belongs to the tRNA(His) guanylyltransferase family. In terms of assembly, homotetramer. Mg(2+) is required as a cofactor.

It carries out the reaction a 5'-end ribonucleotide-tRNA(His) + GTP + ATP + H2O = a 5'-end phospho-guanosine-ribonucleotide-tRNA(His) + AMP + 2 diphosphate + H(+). The catalysed reaction is a 5'-end ribonucleotide-RNA + a ribonucleoside 5'-triphosphate + ATP + H2O = a 5'-end phospho-ribonucleoside-ribonucleotide-RNA + AMP + 2 diphosphate + H(+). Functionally, acts as a tRNA(His) guanylyltransferase that catalyzes 3'-5' addition of a single guanosine residue to the -1 position of tRNA(His), to form a non-Watson-Crick G(-1):A-73 base pair. After addition of G(-1), THG1 removes pyrophosphate from the tRNA 5'-end, generating 5'-monophosphorylated G(-1)-containing tRNA which is important for recognition of tRNA(His) by its cognate histidyl-tRNA synthetase. In addition to the single-G(-1) addition reaction, THG1 polymerizes multiple G residues to the 5'-end of tRNA(His) variants using the 3'-end of the tRNA(His) acceptor stem as a template. This is tRNA(His) guanylyltransferase from Saccharomyces cerevisiae (strain ATCC 204508 / S288c) (Baker's yeast).